The primary structure comprises 569 residues: Proline--tRNA ligase (569 aa).

The protein belongs to the class-II aminoacyl-tRNA synthetase family. ProS type 1 subfamily. As to quaternary structure, homodimer.

The protein localises to the cytoplasm. It carries out the reaction tRNA(Pro) + L-proline + ATP = L-prolyl-tRNA(Pro) + AMP + diphosphate. Functionally, catalyzes the attachment of proline to tRNA(Pro) in a two-step reaction: proline is first activated by ATP to form Pro-AMP and then transferred to the acceptor end of tRNA(Pro). As ProRS can inadvertently accommodate and process non-cognate amino acids such as alanine and cysteine, to avoid such errors it has two additional distinct editing activities against alanine. One activity is designated as 'pretransfer' editing and involves the tRNA(Pro)-independent hydrolysis of activated Ala-AMP. The other activity is designated 'posttransfer' editing and involves deacylation of mischarged Ala-tRNA(Pro). The misacylated Cys-tRNA(Pro) is not edited by ProRS. This Levilactobacillus brevis (strain ATCC 367 / BCRC 12310 / CIP 105137 / JCM 1170 / LMG 11437 / NCIMB 947 / NCTC 947) (Lactobacillus brevis) protein is Proline--tRNA ligase.